Here is a 117-residue protein sequence, read N- to C-terminus: Immunoglobulin heavy variable 1-2 (117 aa).

The first 19 residues, 1-19, serve as a signal peptide directing secretion; that stretch reads MDWTWRILFLVAAATGAHS. Residue Q20 is modified to Pyrrolidone carboxylic acid. Residues 20 to 44 are framework-1; that stretch reads QVQLVQSGAEVKKPGASVKVSCKAS. In terms of domain architecture, Ig-like spans 20–117; the sequence is QVQLVQSGAE…DDTAVYYCAR (98 aa). An intrachain disulfide couples C41 to C115. A complementarity-determining-1 region spans residues 45–52; sequence GYTFTGYY. Positions 53-69 are framework-2; it reads MHWVRQAPGQGLEWMGW. Positions 70 to 77 are complementarity-determining-2; it reads INPNSGGT. The interval 78-115 is framework-3; it reads NYAQKFQGWVTMTRDTSISTAYMELSRLRSDDTAVYYC. Residues 116–117 are complementarity-determining-3; the sequence is AR.

As to quaternary structure, immunoglobulins are composed of two identical heavy chains and two identical light chains; disulfide-linked.

It is found in the secreted. The protein localises to the cell membrane. Its function is as follows. V region of the variable domain of immunoglobulin heavy chains that participates in the antigen recognition. Immunoglobulins, also known as antibodies, are membrane-bound or secreted glycoproteins produced by B lymphocytes. In the recognition phase of humoral immunity, the membrane-bound immunoglobulins serve as receptors which, upon binding of a specific antigen, trigger the clonal expansion and differentiation of B lymphocytes into immunoglobulins-secreting plasma cells. Secreted immunoglobulins mediate the effector phase of humoral immunity, which results in the elimination of bound antigens. The antigen binding site is formed by the variable domain of one heavy chain, together with that of its associated light chain. Thus, each immunoglobulin has two antigen binding sites with remarkable affinity for a particular antigen. The variable domains are assembled by a process called V-(D)-J rearrangement and can then be subjected to somatic hypermutations which, after exposure to antigen and selection, allow affinity maturation for a particular antigen. The polypeptide is Immunoglobulin heavy variable 1-2 (Homo sapiens (Human)).